The chain runs to 435 residues: 3-phosphoshikimate 1-carboxyvinyltransferase (435 aa).

3-phosphoshikimate is bound by residues Lys23, Ser24, and Arg28. Lys23 contacts phosphoenolpyruvate. Phosphoenolpyruvate-binding residues include Gly96 and Arg124. Positions 167, 168, 169, 196, 311, and 340 each coordinate 3-phosphoshikimate. Gln169 serves as a coordination point for phosphoenolpyruvate. Glu311 functions as the Proton acceptor in the catalytic mechanism. Residues Arg344, Arg385, and Lys410 each contribute to the phosphoenolpyruvate site.

Belongs to the EPSP synthase family. As to quaternary structure, monomer.

The protein localises to the cytoplasm. It carries out the reaction 3-phosphoshikimate + phosphoenolpyruvate = 5-O-(1-carboxyvinyl)-3-phosphoshikimate + phosphate. It functions in the pathway metabolic intermediate biosynthesis; chorismate biosynthesis; chorismate from D-erythrose 4-phosphate and phosphoenolpyruvate: step 6/7. Its function is as follows. Catalyzes the transfer of the enolpyruvyl moiety of phosphoenolpyruvate (PEP) to the 5-hydroxyl of shikimate-3-phosphate (S3P) to produce enolpyruvyl shikimate-3-phosphate and inorganic phosphate. The chain is 3-phosphoshikimate 1-carboxyvinyltransferase from Mycolicibacterium paratuberculosis (strain ATCC BAA-968 / K-10) (Mycobacterium paratuberculosis).